The following is a 198-amino-acid chain: Imidazoleglycerol-phosphate dehydratase (198 aa).

This sequence belongs to the imidazoleglycerol-phosphate dehydratase family.

It is found in the cytoplasm. It carries out the reaction D-erythro-1-(imidazol-4-yl)glycerol 3-phosphate = 3-(imidazol-4-yl)-2-oxopropyl phosphate + H2O. It functions in the pathway amino-acid biosynthesis; L-histidine biosynthesis; L-histidine from 5-phospho-alpha-D-ribose 1-diphosphate: step 6/9. This chain is Imidazoleglycerol-phosphate dehydratase, found in Gluconacetobacter diazotrophicus (strain ATCC 49037 / DSM 5601 / CCUG 37298 / CIP 103539 / LMG 7603 / PAl5).